The following is a 594-amino-acid chain: Aspartate--tRNA ligase (594 aa).

Glutamate 171 contacts L-aspartate. The segment at 195–198 is aspartate; that stretch reads QLFK. Arginine 217 is an L-aspartate binding site. ATP is bound by residues 217–219 and glutamine 226; that span reads RDE. Histidine 449 lines the L-aspartate pocket. Glutamate 483 is an ATP binding site. L-aspartate is bound at residue arginine 490. 535 to 538 serves as a coordination point for ATP; that stretch reads GLDR.

Belongs to the class-II aminoacyl-tRNA synthetase family. Type 1 subfamily. Homodimer.

It localises to the cytoplasm. It catalyses the reaction tRNA(Asp) + L-aspartate + ATP = L-aspartyl-tRNA(Asp) + AMP + diphosphate. Catalyzes the attachment of L-aspartate to tRNA(Asp) in a two-step reaction: L-aspartate is first activated by ATP to form Asp-AMP and then transferred to the acceptor end of tRNA(Asp). The sequence is that of Aspartate--tRNA ligase from Proteus mirabilis (strain HI4320).